The sequence spans 271 residues: 2-dehydro-3-deoxyphosphooctonate aldolase (271 aa).

Belongs to the KdsA family.

The protein localises to the cytoplasm. The enzyme catalyses D-arabinose 5-phosphate + phosphoenolpyruvate + H2O = 3-deoxy-alpha-D-manno-2-octulosonate-8-phosphate + phosphate. The protein operates within carbohydrate biosynthesis; 3-deoxy-D-manno-octulosonate biosynthesis; 3-deoxy-D-manno-octulosonate from D-ribulose 5-phosphate: step 2/3. Its pathway is bacterial outer membrane biogenesis; lipopolysaccharide biosynthesis. The sequence is that of 2-dehydro-3-deoxyphosphooctonate aldolase from Campylobacter jejuni subsp. jejuni serotype O:6 (strain 81116 / NCTC 11828).